Reading from the N-terminus, the 301-residue chain is Probable alpha-L-glutamate ligase (301 aa).

Residues 104–287 (LQLLSRKGIG…IAGMIIEYIE (184 aa)) enclose the ATP-grasp domain. Residues Lys141, 178–179 (EY), Asp187, and 211–213 (RSN) each bind ATP. Mg(2+)-binding residues include Asp248, Glu260, and Asn262. Residues Asp248, Glu260, and Asn262 each contribute to the Mn(2+) site.

It belongs to the RimK family. It depends on Mg(2+) as a cofactor. Mn(2+) is required as a cofactor.

The protein is Probable alpha-L-glutamate ligase of Methanococcoides burtonii (strain DSM 6242 / NBRC 107633 / OCM 468 / ACE-M).